The primary structure comprises 268 residues: Small ribosomal subunit protein uS3 (268 aa).

A KH type-2 domain is found at 39-107 (VREYLKKKLK…PVHVNIEEIR (69 aa)). Residues 216-268 (VEEVAEEKRPRRNARPGGDRRPRRDGEGGGPAGARRGAPRRAGGAGGDGKTGE) form a disordered region. A compositionally biased stretch (basic and acidic residues) spans 232 to 242 (GGDRRPRRDGE). The segment covering 248 to 257 (GARRGAPRRA) has biased composition (low complexity). The segment covering 258–268 (GGAGGDGKTGE) has biased composition (gly residues).

Belongs to the universal ribosomal protein uS3 family. In terms of assembly, part of the 30S ribosomal subunit. Forms a tight complex with proteins S10 and S14.

Functionally, binds the lower part of the 30S subunit head. Binds mRNA in the 70S ribosome, positioning it for translation. The polypeptide is Small ribosomal subunit protein uS3 (Paraburkholderia phytofirmans (strain DSM 17436 / LMG 22146 / PsJN) (Burkholderia phytofirmans)).